A 320-amino-acid polypeptide reads, in one-letter code: o-succinylbenzoate synthase (320 aa).

The Proton donor role is filled by lysine 133. Mg(2+) contacts are provided by aspartate 161, glutamate 190, and aspartate 213. Lysine 235 (proton acceptor) is an active-site residue.

It belongs to the mandelate racemase/muconate lactonizing enzyme family. MenC type 1 subfamily. A divalent metal cation serves as cofactor.

It catalyses the reaction (1R,6R)-6-hydroxy-2-succinyl-cyclohexa-2,4-diene-1-carboxylate = 2-succinylbenzoate + H2O. Its pathway is quinol/quinone metabolism; 1,4-dihydroxy-2-naphthoate biosynthesis; 1,4-dihydroxy-2-naphthoate from chorismate: step 4/7. It participates in quinol/quinone metabolism; menaquinone biosynthesis. Converts 2-succinyl-6-hydroxy-2,4-cyclohexadiene-1-carboxylate (SHCHC) to 2-succinylbenzoate (OSB). This chain is o-succinylbenzoate synthase, found in Citrobacter koseri (strain ATCC BAA-895 / CDC 4225-83 / SGSC4696).